Reading from the N-terminus, the 331-residue chain is DNA-directed RNA polymerase subunit alpha (331 aa).

An alpha N-terminal domain (alpha-NTD) region spans residues 1-235 (MTMHIRWRGM…KHLNPFVQYR (235 aa)). The interval 255–331 (QLEAKLNMTL…GMRVPNQPLF (77 aa)) is alpha C-terminal domain (alpha-CTD).

This sequence belongs to the RNA polymerase alpha chain family. In terms of assembly, homodimer. The RNAP catalytic core consists of 2 alpha, 1 beta, 1 beta' and 1 omega subunit. When a sigma factor is associated with the core the holoenzyme is formed, which can initiate transcription.

It catalyses the reaction RNA(n) + a ribonucleoside 5'-triphosphate = RNA(n+1) + diphosphate. Functionally, DNA-dependent RNA polymerase catalyzes the transcription of DNA into RNA using the four ribonucleoside triphosphates as substrates. The polypeptide is DNA-directed RNA polymerase subunit alpha (Rhodopirellula baltica (strain DSM 10527 / NCIMB 13988 / SH1)).